Consider the following 455-residue polypeptide: 1-deoxy-D-xylulose 5-phosphate reductoisomerase (455 aa).

Positions 30, 31, 32, 33, 63, and 159 each coordinate NADPH. Lys-160 lines the 1-deoxy-D-xylulose 5-phosphate pocket. Residue Glu-161 coordinates NADPH. A Mn(2+)-binding site is contributed by Asp-185. 2 residues coordinate 1-deoxy-D-xylulose 5-phosphate: Ser-186 and Glu-187. Glu-187 is a binding site for Mn(2+). Positions 205-214 are enriched in polar residues; sequence YATAKQSIQP. The tract at residues 205-233 is disordered; sequence YATAKQSIQPESVRATDPPSSTTDSPAKT. Residues Ser-246 and His-269 each coordinate 1-deoxy-D-xylulose 5-phosphate. Residue Gly-275 participates in NADPH binding. 1-deoxy-D-xylulose 5-phosphate contacts are provided by Ser-282, Asn-287, Lys-288, and Glu-291. Mn(2+) is bound at residue Glu-291.

It belongs to the DXR family. Mg(2+) serves as cofactor. The cofactor is Mn(2+).

It carries out the reaction 2-C-methyl-D-erythritol 4-phosphate + NADP(+) = 1-deoxy-D-xylulose 5-phosphate + NADPH + H(+). It functions in the pathway isoprenoid biosynthesis; isopentenyl diphosphate biosynthesis via DXP pathway; isopentenyl diphosphate from 1-deoxy-D-xylulose 5-phosphate: step 1/6. Functionally, catalyzes the NADPH-dependent rearrangement and reduction of 1-deoxy-D-xylulose-5-phosphate (DXP) to 2-C-methyl-D-erythritol 4-phosphate (MEP). The sequence is that of 1-deoxy-D-xylulose 5-phosphate reductoisomerase from Rhodopirellula baltica (strain DSM 10527 / NCIMB 13988 / SH1).